Consider the following 326-residue polypeptide: F-box/LRR-repeat protein 12 (326 aa).

An F-box domain is found at 1–47 (MATFADLPDSVLLEIFSYLPVRDRIRISRVCHHWKKLVDDRWLWRHV). 7 LRR repeats span residues 51-78 (LYTM…RMGG), 86-111 (APQL…CLHV), 161-185 (VPAF…VLGG), 186-211 (TYRV…EVLG), 212-236 (CTLS…IRLT), 237-261 (VRGL…CLLG), and 266-291 (PEMP…ELQG).

As to quaternary structure, interacts with SKP1 and CUL1.

The protein operates within protein modification; protein ubiquitination. Functionally, substrate-recognition component of the SCF (SKP1-CUL1-F-box protein)-type E3 ubiquitin ligase complex. Mediates the polyubiquitination and proteasomal degradation of CAMK1 leading to disruption of cyclin D1/CDK4 complex assembly which results in G1 cell cycle arrest in lung epithelia. The protein is F-box/LRR-repeat protein 12 (FBXL12) of Bos taurus (Bovine).